A 570-amino-acid chain; its full sequence is 4-coumarate--CoA ligase 4 (570 aa).

ATP is bound by residues S218, S219, G220, T221, T222, and K226. Y268 provides a ligand contact to (E)-4-coumaroyl-AMP. Residue R289 coordinates CoA. Residues 291–360 form an SBD1 region; sequence ELNLVMELIQ…LKFPNAIFGQ (70 aa). Residues A338, Q360, G361, and T365 each contribute to the (E)-4-coumaroyl-AMP site. Residues Q360, G361, T365, D448, and R463 each coordinate ATP. An SBD2 region spans residues 361–427; the sequence is GYGMTESGTV…VRGHQLMKGY (67 aa). The (E)-4-coumaroyl-AMP site is built by K465 and K469. 2 residues coordinate CoA: K471 and G472. Residue K554 participates in ATP binding.

Belongs to the ATP-dependent AMP-binding enzyme family. It depends on Mg(2+) as a cofactor.

It carries out the reaction (E)-sinapate + ATP + CoA = (E)-sinapoyl-CoA + AMP + diphosphate. It catalyses the reaction (E)-4-coumarate + ATP + CoA = (E)-4-coumaroyl-CoA + AMP + diphosphate. The catalysed reaction is (E)-caffeate + ATP + CoA = (E)-caffeoyl-CoA + AMP + diphosphate. The enzyme catalyses (E)-ferulate + ATP + CoA = (E)-feruloyl-CoA + AMP + diphosphate. It carries out the reaction (E)-sinapate + ATP + H(+) = (E)-sinapoyl-AMP + diphosphate. It catalyses the reaction (E)-sinapoyl-AMP + CoA = (E)-sinapoyl-CoA + AMP + H(+). The catalysed reaction is (E)-4-coumarate + ATP + H(+) = (E)-4-coumaroyl-AMP + diphosphate. The enzyme catalyses (E)-4-coumaroyl-AMP + CoA = (E)-4-coumaroyl-CoA + AMP + H(+). It carries out the reaction (E)-caffeate + ATP + H(+) = (E)-caffeoyl-AMP + diphosphate. It catalyses the reaction (E)-caffeoyl-AMP + CoA = (E)-caffeoyl-CoA + AMP + H(+). The catalysed reaction is (E)-ferulate + ATP + H(+) = (E)-feruloyl-AMP + diphosphate. The enzyme catalyses (E)-feruloyl-AMP + CoA = (E)-feruloyl-CoA + AMP + H(+). The protein operates within phytoalexin biosynthesis; 3,4',5-trihydroxystilbene biosynthesis; 3,4',5-trihydroxystilbene from trans-4-coumarate: step 1/2. Its function is as follows. Produces CoA thioesters of a variety of hydroxy- and methoxy-substituted cinnamic acids, which are used to synthesize several phenylpropanoid-derived compounds, including anthocyanins, flavonoids, isoflavonoids, coumarins, lignin, suberin and wall-bound phenolics. Follows a two-step reaction mechanism, wherein the carboxylate substrate first undergoes adenylation by ATP, followed by a thioesterification in the presence of CoA to yield the final CoA thioesters. This is 4-coumarate--CoA ligase 4 from Arabidopsis thaliana (Mouse-ear cress).